The sequence spans 84 residues: Small ribosomal subunit protein bS20 (84 aa).

The tract at residues 1 to 22 is disordered; the sequence is MPAPTKRERQNRKRFERNRSVR. The span at 9 to 22 shows a compositional bias: basic residues; that stretch reads RQNRKRFERNRSVR.

It belongs to the bacterial ribosomal protein bS20 family.

In terms of biological role, binds directly to 16S ribosomal RNA. The polypeptide is Small ribosomal subunit protein bS20 (Rubrobacter xylanophilus (strain DSM 9941 / JCM 11954 / NBRC 16129 / PRD-1)).